The primary structure comprises 80 residues: EMBRYO SURROUNDING FACTOR 1-like protein 1 (80 aa).

The signal sequence occupies residues 1–22 (MKSSHIALLCIVVLSLFALHEC). 4 disulfides stabilise this stretch: cysteine 38/cysteine 52, cysteine 43/cysteine 78, cysteine 50/cysteine 74, and cysteine 53/cysteine 64.

This sequence belongs to the MEG family. In terms of tissue distribution, expressed in leaves.

This chain is EMBRYO SURROUNDING FACTOR 1-like protein 1 (ESFL1), found in Arabidopsis thaliana (Mouse-ear cress).